Consider the following 3295-residue polypeptide: Toxin CdiA (3295 aa).

A two-partner system transport domain (TPS) region spans residues 33-366; sequence PSSGVGHTQR…GKGNTQLTTA (334 aa). The helical transmembrane segment at 55–75 threads the bilayer; the sequence is LLIALGCISLSAQAAIVADGS. Residues 353–1574 form an FHA-1 region; that stretch reads GVLYGKGNTQ…LLVYAKTLTN (1222 aa). The disordered stretch occupies residues 1165 to 1185; sequence PPSSIPPSSTQSSSTQASASP. Residues 1575–1796 are receptor binding domain (RBD); that stretch reads RRQILTATTD…LKTDKGDYAP (222 aa). The tract at residues 1797–1977 is YP domain; that stretch reads GPEAALSLAN…GVKPGDLRAN (181 aa). The interval 1806–1831 is disordered; sequence NISPPSSLDATGPRGVPPPSDDLNRT. A periplasmic FHA-1 repeat (pFR) region spans residues 1998–2035; that stretch reads GAISASNNLQISMAKDITLNNRCGLLQAGNHLQLSTLN. Residues 2022–2676 form an FHA-2 region; sequence LLQAGNHLQL…DRDNYDAKQS (655 aa). Disordered regions lie at residues 2260–2292 and 2823–2847; these read TSQTEQHDEQRNHTGTKKGLLSSTTTRSEEGRS and QQNVDDLSRDTGNANGSIGPIFDKE. Polar residues predominate over residues 2823–2838; that stretch reads QQNVDDLSRDTGNANG. Positions 3073 to 3076 match the VENN CT cleavage motif motif; that stretch reads VENN. The interval 3073-3295 is CT domain; sequence VENNLLGGNE…QKKDAMEDSK (223 aa). The tract at residues 3276–3295 is disordered; the sequence is SSEFGSSLIQQKKDAMEDSK. A compositionally biased stretch (basic and acidic residues) spans 3286–3295; sequence QKKDAMEDSK.

In the N-terminal section; belongs to the CdiA toxin family. In terms of assembly, probably interacts with cognate immunity protein CdiI.

It localises to the membrane. The protein resides in the target cell. It is found in the target cell cytoplasm. Functionally, toxic component of a toxin-immunity protein module, which functions as a cellular contact-dependent growth inhibition (CDI) system. CDI modules allow bacteria to communicate with and inhibit the growth of closely related neighboring bacteria in a contact-dependent fashion. CDI is neutralized by its cognate immunity protein CdiI, but not by non-cognate CdiI from other bacteria. The CdiA protein is thought to be exported from the cell through the central lumen of CdiB, the other half of its two-partner system (TPS). The TPS domain probably remains associated with CdiB while the FHA-1 domain forms an extended filament with the receptor-binding domain (RBD) at its extremity; in the secretion arrested state the C-terminus of the RBD and YP domains form a hairpin-like structure as the FHA-2, PT and CT domains are periplasmic. The YP domain is probably responsible for this arrest at the point where it re-enters the host cell periplasm. Upon binding to a target cell outer membrane receptor a signal is transmitted to activate secretion. The filament elongates slightly, the rest of CdiA is secreted and the FHA-2 domain becomes stably associated with the target cell's outer membrane where it facilitates entry of the toxic CT domain into the target cell periplasm. From there the toxic CT domain is cleaved and gains access to the target cell cytoplasm via an inner membrane protein. The sequence is that of Toxin CdiA from Yersinia pestis.